Reading from the N-terminus, the 296-residue chain is Probable AP endonuclease (296 aa).

Cysteines 16 and 20 form a disulfide. Residues H78, H115, E142, H182, H218, D231, H233, and E271 each contribute to the Zn(2+) site.

Belongs to the AP endonuclease 2 family. The cofactor is Zn(2+).

The protein resides in the host nucleus. The protein localises to the host cytoplasm. It localises to the virion. In terms of biological role, endonuclease of the viral base excision repair system that catalyzes DNA cleavage reaction at the apurinic or apyrimidinic sites (AP sites). Cleaves phosphodiester bonds on the 5' side of AP sites. In addition to endonuclease activity, the AP endonuclease has a proofreading 3'-5' exonuclease activity that is considerably more efficient in the elimination of a mismatch than in that of a correctly paired base. Displays 3'-phosphatase and 3'-repair diesterase activities. The single nucleotide gaps generated by the AP endonuclease are filled by the viral repair DNA polymerase X and the DNA ligase. This chain is Probable AP endonuclease, found in Ornithodoros (relapsing fever ticks).